A 120-amino-acid chain; its full sequence is Peptidyl-tRNA hydrolase (120 aa).

It belongs to the PTH2 family. Homodimer.

It is found in the cytoplasm. The catalysed reaction is an N-acyl-L-alpha-aminoacyl-tRNA + H2O = an N-acyl-L-amino acid + a tRNA + H(+). In terms of biological role, the natural substrate for this enzyme may be peptidyl-tRNAs which drop off the ribosome during protein synthesis. This chain is Peptidyl-tRNA hydrolase, found in Saccharolobus solfataricus (strain ATCC 35092 / DSM 1617 / JCM 11322 / P2) (Sulfolobus solfataricus).